We begin with the raw amino-acid sequence, 482 residues long: Histone deacetylase 1 (482 aa).

The histone deacetylase stretch occupies residues 9-321; the sequence is RKVCYYYDGD…WTYETAVALD (313 aa). 2 residues coordinate 1D-myo-inositol 1,4,5,6-tetrakisphosphate: glycine 27 and lysine 31. Lysine 74 bears the N6-acetyllysine; alternate mark. Lysine 74 is covalently cross-linked (Glycyl lysine isopeptide (Lys-Gly) (interchain with G-Cter in SUMO2); alternate). Histidine 141 is an active-site residue. Residues aspartate 176 and histidine 178 each contribute to the Zn(2+) site. The residue at position 220 (lysine 220) is an N6-acetyllysine. S-nitrosocysteine is present on cysteine 261. Zn(2+) is bound at residue aspartate 264. Residue arginine 270 participates in 1D-myo-inositol 1,4,5,6-tetrakisphosphate binding. Cysteine 273 is subject to S-nitrosocysteine. Residues 390–400 are compositionally biased toward acidic residues; that stretch reads PEESGDEDEDD. Residues 390–482 form a disordered region; that stretch reads PEESGDEDED…KGVKEEVKLA (93 aa). Phosphoserine is present on residues serine 393, serine 406, and serine 409. Basic and acidic residues predominate over residues 401 to 416; sequence PDKRISICSSDKRIAC. Over residues 417–427 the composition is skewed to acidic residues; it reads EEEFSDSEEEG. A phosphoserine; by CK2 mark is found at serine 421 and serine 423. Position 432 is an N6-methylated lysine; by EHMT2 (lysine 432). A Glycyl lysine isopeptide (Lys-Gly) (interchain with G-Cter in SUMO2) cross-link involves residue lysine 438. Over residues 443 to 482 the composition is skewed to basic and acidic residues; it reads VKTEDEKEKDPEEKKEVTEEEKTKEEKPEAKGVKEEVKLA. Lysine 444 is covalently cross-linked (Glycyl lysine isopeptide (Lys-Gly) (interchain with G-Cter in SUMO2); alternate). Lysine 444 is covalently cross-linked (Glycyl lysine isopeptide (Lys-Gly) (interchain with G-Cter in SUMO); alternate). Glycyl lysine isopeptide (Lys-Gly) (interchain with G-Cter in SUMO2) cross-links involve residues lysine 456, lysine 457, and lysine 473. Lysine 476 participates in a covalent cross-link: Glycyl lysine isopeptide (Lys-Gly) (interchain with G-Cter in SUMO2); alternate. A Glycyl lysine isopeptide (Lys-Gly) (interchain with G-Cter in SUMO); alternate cross-link involves residue lysine 476. A Glycyl lysine isopeptide (Lys-Gly) (interchain with G-Cter in SUMO2) cross-link involves residue lysine 480.

This sequence belongs to the histone deacetylase family. HD type 1 subfamily. In terms of assembly, part of the core histone deacetylase (HDAC) complex composed of HDAC1, HDAC2, RBBP4 and RBBP7, the core complex associates with SIN3, SAP18 and SAP30 to form the SIN3 HDAC complex. Component of the nucleosome remodeling and deacetylase (NuRD) repressor complex, composed of core proteins MTA1, MTA2, MTA3, RBBP4, RBBP7, HDAC1, HDAC2, MBD2, MBD3, and peripherally associated proteins CDK2AP1, CDK2AP2, GATAD2A, GATAD2B, CHD3, CHD4 and CHD5. The exact stoichiometry of the NuRD complex is unknown, and some subunits such as MBD2 and MBD3, GATAD2A and GATAD2B, and CHD3, CHD4 and CHD5 define mutually exclusive NuRD complexes. Component of a BHC histone deacetylase complex that contains HDAC1, HDAC2, HMG20B/BRAF35, KDM1A, RCOR1/CoREST and PHF21A/BHC80. The BHC complex may also contain ZMYM2, ZNF217, ZMYM3, GSE1 and GTF2I. Component of a mSin3A corepressor complex that contains SIN3A, SAP130, SUDS3/SAP45, ARID4B/SAP180, HDAC1 and HDAC2. Component of the SIN3B complex, which includes SIN3B, HDAC1, PHF12 and MORF4L1. Found in a trimeric complex with APBB1 and TSHZ3; the interaction between HDAC1 and APBB1 is mediated by TSHZ3. Forms a complex comprising APPL1, RUVBL2, APPL2, CTNNB1 and HDAC2. Component of a RCOR/GFI/KDM1A/HDAC complex. Part of a complex composed of TRIM28, HDAC1, HDAC2 and EHMT2. Part of a complex containing at least CDYL, MIER1, MIER2, HDAC1 and HDAC2. The large PER complex involved in the histone deacetylation is composed of at least HDAC1, PER2, SFPQ and SIN3A. Associates with the 9-1-1 complex; interacts with HUS1. Found in a complex with DNMT3A and HDAC7. Found in a complex with YY1, SIN3A and GON4L. Identified in a histone deacetylase complex that contains DNTTIP1, HDAC1 and MIDEAS; this complex assembles into a tetramer that contains four copies of each protein chain. Found in a complex composed of at least SINHCAF, SIN3A, HDAC1, SAP30, RBBP4, OGT and TET1. Interacts with GFI1; the interaction is direct. Interacts directly with GFI1B. Interacts with TSHZ3 (via N-terminus); the interaction is direct. Interacts with APEX1; the interaction is not dependent on the acetylated status of APEX1. Interacts with BANP. Interacts with BAZ2A/TIP5. Interacts with BCL6. Interacts with BCOR. Interacts with BHLHE40/DEC1. Interacts with BRCC3; this interaction is enhanced in the presence of PWWP2B. Interacts with BRMS1. Interacts with BRMS1L. Interacts with C10orf90/FATS (via its N-terminal); the interaction prevents binding of HDAC1 to CDKN1A/p21 and facilitates the acetylation and stabilization of CDKN1A/p21. Interacts with CBFA2T3. Interacts with CCAR2. Interacts with CDK2AP1. Interacts with CHD3. Interacts with CHD4. Interacts with CHFR. Interacts with CIART. Interacts with CDKN1A/p21. Interacts with CDK5 complexed to CDK5R1 (p25). Interacts with CRY1. Interacts with DAXX. Interacts with DDIT3/CHOP. Interacts with DDX5. Interacts with DHX36; this interaction occurs in a RNA-dependent manner. Interacts with DNMT1. Interacts with DNTTIP1. Interacts with E4F1. Interacts with EP300. Interacts with ERCC6. Interacts with GATAD2A. Interacts with HCFC1. Interacts with HDAC9. Interacts with HUS1. Interacts with INSM1. Interacts with KDM4A. Interacts with KDM5A; this interaction impairs histone deacetylation. Interacts with KDM5B. Interacts with KLF1. Interacts with MBD3L2. Interacts with MIER1. Interacts with NFE4. Interacts with NR4A2/NURR1. Interacts with NR1D2 (via C-terminus). Interacts with NRIP1. Interacts with NSD2. Interacts with PACS2. Interacts with PHB2. Interacts with PPHLN1. Interacts with PRDM6. Interacts with PRDM16. Interacts with PWWP2A in a MTA1-dependent manner. Interacts with PWWP2B. Interacts with RB1. Interacts with RERE. Interacts with SANBR (via the BTB domain). Interacts with SAMSN1. Interacts with SAP30L. Interacts with SETDB1. Interacts with SIN3A. Interacts with SMAD3. Interacts with SMAD4; positively regulated by ZBTB7A. Interacts with SMARCAD1. Interacts with SMARCA4/BRG1. Interacts with SMYD2. Interacts with SMYD4 (via MYND-type zinc finger). Interacts with SP1; the interaction deacetylates SP1 and regulates its transcriptional activity. Interacts with SP3; the interaction deacetylates SP3 and regulates its transcriptional activity. In vitro, C(18) ceramides increase this interaction and the subsequent SP3 deacetylation and SP3-mediated repression of the TERT promoter. Interacts with SPEN/MINT. Interacts with SPHK2. Interacts with SUV39H1. Interacts with TGIF. Interacts with TGIF2. Interacts with TRAF6. Interacts with TRIM28; the interaction recruits HDAC1 to E2F1 and inhibits its acetylation. Interacts with TSC22D3 isoform 1; this interaction affects HDAC1 activity on MYOG promoter and thus inhibits MYOD1 transcriptional activity. Interacts with UHRF1. Interacts with UHRF2. Interacts with ZBTB7A. Interacts with ZMYND8. Interacts with ZMYND15. Interacts with ZNF431. Interacts with ZNF516; this interaction is enhanced in the presence of PWWP2B. Interacts with ZNF541. Interacts with ZNF638. Interacts with ZNHIT1. Interacts with the non-histone region of MACROH2A1. Identified in a complex with HDAC2, KCTD19, DNTTIP1 and ZNF541. Interacts with VRK1. As to quaternary structure, (Microbial infection) Interacts with SV40 large T antigen. Requires Zn(2+) as cofactor. In terms of processing, sumoylated on Lys-444 and Lys-476; which promotes enzymatic activity. Desumoylated by SENP1. Phosphorylation on Ser-421 and Ser-423 promotes enzymatic activity and interactions with NuRD and SIN3 complexes. Phosphorylated by CDK5. Post-translationally, ubiquitinated by CHFR, leading to its degradation by the proteasome. Ubiquitinated by KCTD11, leading to proteasomal degradation. In terms of tissue distribution, ubiquitous, with higher levels in heart, pancreas and testis, and lower levels in kidney and brain.

It localises to the nucleus. The enzyme catalyses N(6)-acetyl-L-lysyl-[histone] + H2O = L-lysyl-[histone] + acetate. It catalyses the reaction N(6)-acetyl-L-lysyl-[protein] + H2O = L-lysyl-[protein] + acetate. It carries out the reaction N(6)-(2E)-butenoyl-L-lysyl-[protein] + H2O = (2E)-2-butenoate + L-lysyl-[protein]. The catalysed reaction is N(6)-[(S)-lactoyl]-L-lysyl-[protein] + H2O = (S)-lactate + L-lysyl-[protein]. With respect to regulation, inositol tetraphosphate (1D-myo-inositol 1,4,5,6-tetrakisphosphate) may act as an intermolecular glue between HDAC1 and N-Cor repressor complex components. In terms of biological role, histone deacetylase that catalyzes the deacetylation of lysine residues on the N-terminal part of the core histones (H2A, H2B, H3 and H4). Histone deacetylation gives a tag for epigenetic repression and plays an important role in transcriptional regulation, cell cycle progression and developmental events. Histone deacetylases act via the formation of large multiprotein complexes. Acts as a component of the histone deacetylase NuRD complex which participates in the remodeling of chromatin. As part of the SIN3B complex is recruited downstream of the constitutively active genes transcriptional start sites through interaction with histones and mitigates histone acetylation and RNA polymerase II progression within transcribed regions contributing to the regulation of transcription. Also functions as a deacetylase for non-histone targets, such as NR1D2, RELA, SP1, SP3, STAT3 and TSHZ3. Deacetylates SP proteins, SP1 and SP3, and regulates their function. Component of the BRG1-RB1-HDAC1 complex, which negatively regulates the CREST-mediated transcription in resting neurons. Upon calcium stimulation, HDAC1 is released from the complex and CREBBP is recruited, which facilitates transcriptional activation. Deacetylates TSHZ3 and regulates its transcriptional repressor activity. Deacetylates 'Lys-310' in RELA and thereby inhibits the transcriptional activity of NF-kappa-B. Deacetylates NR1D2 and abrogates the effect of KAT5-mediated relieving of NR1D2 transcription repression activity. Component of a RCOR/GFI/KDM1A/HDAC complex that suppresses, via histone deacetylase (HDAC) recruitment, a number of genes implicated in multilineage blood cell development. Involved in CIART-mediated transcriptional repression of the circadian transcriptional activator: CLOCK-BMAL1 heterodimer. Required for the transcriptional repression of circadian target genes, such as PER1, mediated by the large PER complex or CRY1 through histone deacetylation. In addition to protein deacetylase activity, also has protein-lysine deacylase activity: acts as a protein decrotonylase and delactylase by mediating decrotonylation ((2E)-butenoyl) and delactylation (lactoyl) of histones, respectively. This Homo sapiens (Human) protein is Histone deacetylase 1.